The chain runs to 214 residues: ATP phosphoribosyltransferase (214 aa).

This sequence belongs to the ATP phosphoribosyltransferase family. Short subfamily. In terms of assembly, heteromultimer composed of HisG and HisZ subunits.

It localises to the cytoplasm. It carries out the reaction 1-(5-phospho-beta-D-ribosyl)-ATP + diphosphate = 5-phospho-alpha-D-ribose 1-diphosphate + ATP. The protein operates within amino-acid biosynthesis; L-histidine biosynthesis; L-histidine from 5-phospho-alpha-D-ribose 1-diphosphate: step 1/9. In terms of biological role, catalyzes the condensation of ATP and 5-phosphoribose 1-diphosphate to form N'-(5'-phosphoribosyl)-ATP (PR-ATP). Has a crucial role in the pathway because the rate of histidine biosynthesis seems to be controlled primarily by regulation of HisG enzymatic activity. This Streptococcus gordonii (strain Challis / ATCC 35105 / BCRC 15272 / CH1 / DL1 / V288) protein is ATP phosphoribosyltransferase.